The sequence spans 59 residues: UPF0434 protein PBPRA2383 (59 aa).

Belongs to the UPF0434 family.

The protein is UPF0434 protein PBPRA2383 of Photobacterium profundum (strain SS9).